Consider the following 254-residue polypeptide: UPF0246 protein FTF1693c (254 aa).

This sequence belongs to the UPF0246 family.

The polypeptide is UPF0246 protein FTF1693c (Francisella tularensis subsp. tularensis (strain FSC 198)).